The primary structure comprises 529 residues: MQTSQKHHSAAGLHMLYPQVYCSPQFQAKDNKGFSDIPSKENFFTLESSTASGSLPSYDSPSVSITSGRSPFSPQGSQSCISDLHHSPDNVYGSPLSGVSSLAYDEAGVKSKIRELEVSLLSGDTKVEEFSGFSPAAGKSWNWDELLALTPQLDLKEVLVEAARAVADGDFATAYGFLDVLEQMVSVSGSPIQRLGTYMAEGLRARLEGSGSNIYKSLKCNEPTGRELMSYMSVLYEICPYWKFAYTTANVEILEAIAGETRVHIIDFQIAQGSQYMFLIQELAKRPGGPPLLRVTGVDDSQSTYARGGGLSLVGERLATLAQSCGVPFEFHDAIMSGCKVQREHLGLEPGFAVVVNFPYVLHHMPDESVSVENHRDRLLHLIKSLSPKLVTLVEQESNTNTSPFLSRFVETLDYYTAMFESIDAARPRDDKQRISAEQHCVARDIVNMIACEESERVERHEVLGKWRVRMMMAGFTGWPVSTSAAFAASEMLKAYDKNYKLGGHEGALYLFWKRRPMATCSVWKPNPN.

Residues 51–81 (ASGSLPSYDSPSVSITSGRSPFSPQGSQSCI) are compositionally biased toward polar residues. Residues 51–84 (ASGSLPSYDSPSVSITSGRSPFSPQGSQSCISDL) form a disordered region. A GRAS domain is found at 146 to 525 (LLALTPQLDL…RPMATCSVWK (380 aa)). Positions 153–213 (LDLKEVLVEA…RARLEGSGSN (61 aa)) are leucine repeat I (LRI). A VHIID region spans residues 232–297 (MSVLYEICPY…GGPPLLRVTG (66 aa)). The VHIID signature appears at 263-267 (VHIID). Positions 313–345 (LVGERLATLAQSCGVPFEFHDAIMSGCKVQREH) are leucine repeat II (LRII). Positions 354–448 (VVVNFPYVLH…QHCVARDIVN (95 aa)) are PFYRE. The interval 451–525 (ACEESERVER…RPMATCSVWK (75 aa)) is SAW.

It belongs to the GRAS family. In terms of tissue distribution, expressed in roots, hypocotyls, cotyledons, shoot apex, leaves, flowers and siliques.

It localises to the cytoplasm. Its subcellular location is the nucleus. Functionally, probable transcription factor that acts as a positive regulator of continuous red light signals downstream of phytochrome B (phyB). Required for the regulation of hypocotyl elongation during de-etiolation. May be required to modulate phytochrome A (phyA) signal transduction in a phyB-independent way. This is Scarecrow-like protein 13 (SCL13) from Arabidopsis thaliana (Mouse-ear cress).